Consider the following 448-residue polypeptide: Tubulin beta-2 chain (448 aa).

8 residues coordinate GTP: glutamine 11, glutamate 69, serine 138, glycine 142, threonine 143, glycine 144, asparagine 204, and asparagine 226. Glutamate 69 provides a ligand contact to Mg(2+). Residues glutamate 421–methionine 448 form a disordered region. A compositionally biased stretch (acidic residues) spans threonine 429–methionine 448.

It belongs to the tubulin family. In terms of assembly, dimer of alpha and beta chains. A typical microtubule is a hollow water-filled tube with an outer diameter of 25 nm and an inner diameter of 15 nM. Alpha-beta heterodimers associate head-to-tail to form protofilaments running lengthwise along the microtubule wall with the beta-tubulin subunit facing the microtubule plus end conferring a structural polarity. Microtubules usually have 13 protofilaments but different protofilament numbers can be found in some organisms and specialized cells. Mg(2+) is required as a cofactor.

It localises to the cytoplasm. Its subcellular location is the cytoskeleton. Tubulin is the major constituent of microtubules, a cylinder consisting of laterally associated linear protofilaments composed of alpha- and beta-tubulin heterodimers. Microtubules grow by the addition of GTP-tubulin dimers to the microtubule end, where a stabilizing cap forms. Below the cap, tubulin dimers are in GDP-bound state, owing to GTPase activity of alpha-tubulin. This Eleusine indica (Goosegrass) protein is Tubulin beta-2 chain (TUBB2).